The primary structure comprises 486 residues: tRNA sulfurtransferase (486 aa).

The 105-residue stretch at 61-165 (AILIDVLGRI…NDHMMLIKAR (105 aa)) folds into the THUMP domain. ATP is bound by residues 183-184 (LI), Lys-265, Gly-287, and Gln-296. Cysteines 344 and 456 form a disulfide. The 78-residue stretch at 404 to 481 (LSANDVILDI…NGFANVRVFA (78 aa)) folds into the Rhodanese domain. Catalysis depends on Cys-456, which acts as the Cysteine persulfide intermediate.

Belongs to the ThiI family.

The protein localises to the cytoplasm. The enzyme catalyses [ThiI sulfur-carrier protein]-S-sulfanyl-L-cysteine + a uridine in tRNA + 2 reduced [2Fe-2S]-[ferredoxin] + ATP + H(+) = [ThiI sulfur-carrier protein]-L-cysteine + a 4-thiouridine in tRNA + 2 oxidized [2Fe-2S]-[ferredoxin] + AMP + diphosphate. It catalyses the reaction [ThiS sulfur-carrier protein]-C-terminal Gly-Gly-AMP + S-sulfanyl-L-cysteinyl-[cysteine desulfurase] + AH2 = [ThiS sulfur-carrier protein]-C-terminal-Gly-aminoethanethioate + L-cysteinyl-[cysteine desulfurase] + A + AMP + 2 H(+). It functions in the pathway cofactor biosynthesis; thiamine diphosphate biosynthesis. Catalyzes the ATP-dependent transfer of a sulfur to tRNA to produce 4-thiouridine in position 8 of tRNAs, which functions as a near-UV photosensor. Also catalyzes the transfer of sulfur to the sulfur carrier protein ThiS, forming ThiS-thiocarboxylate. This is a step in the synthesis of thiazole, in the thiamine biosynthesis pathway. The sulfur is donated as persulfide by IscS. The polypeptide is tRNA sulfurtransferase (Mannheimia succiniciproducens (strain KCTC 0769BP / MBEL55E)).